We begin with the raw amino-acid sequence, 637 residues long: Conglutin beta 5 (637 aa).

Residues 1–30 (MAKMRVRFPMLVLLLGVVFLLAVSIGIAYG) form the signal peptide. 3 stretches are compositionally biased toward basic and acidic residues: residues 33-105 (DVIK…REQE), 136-174 (RREE…REQE), and 184-203 (DYGR…REQE). Disordered stretches follow at residues 33–221 (DVIK…YFSS) and 384–439 (EQED…LRSN). Positions 217–375 (YYFSSERFQT…TFNTHYEEIQ (159 aa)) constitute a Cupin type-1 1 domain. Over residues 389 to 417 (EQRREQEQSHQDEGVIVRVSKEQIQELRK) the composition is skewed to basic and acidic residues. In terms of domain architecture, Cupin type-1 2 spans 434 to 594 (FNLRSNEPIY…IFPGSAEDVE (161 aa)). N-linked (GlcNAc...) asparagine glycosylation is present at Asn-544. Positions 606–615 (ANAQPQQQQQ) are enriched in low complexity. The disordered stretch occupies residues 606-626 (ANAQPQQQQQQREKEGRRGRR).

This sequence belongs to the 7S seed storage protein family. Component of globulins complexes which accumulate in seeds.

In terms of biological role, seed storage protein. Accumulates during seed development and is hydrolyzed after germination to provide a carbon and nitrogen source for the developing seedling. In Lupinus angustifolius (Narrow-leaved blue lupine), this protein is Conglutin beta 5.